Consider the following 374-residue polypeptide: 4-hydroxy-3-methylbut-2-en-1-yl diphosphate synthase (flavodoxin) (374 aa).

Positions 270, 273, 305, and 312 each coordinate [4Fe-4S] cluster.

It belongs to the IspG family. [4Fe-4S] cluster is required as a cofactor.

It carries out the reaction (2E)-4-hydroxy-3-methylbut-2-enyl diphosphate + oxidized [flavodoxin] + H2O + 2 H(+) = 2-C-methyl-D-erythritol 2,4-cyclic diphosphate + reduced [flavodoxin]. It functions in the pathway isoprenoid biosynthesis; isopentenyl diphosphate biosynthesis via DXP pathway; isopentenyl diphosphate from 1-deoxy-D-xylulose 5-phosphate: step 5/6. Converts 2C-methyl-D-erythritol 2,4-cyclodiphosphate (ME-2,4cPP) into 1-hydroxy-2-methyl-2-(E)-butenyl 4-diphosphate. This chain is 4-hydroxy-3-methylbut-2-en-1-yl diphosphate synthase (flavodoxin), found in Cellvibrio japonicus (strain Ueda107) (Pseudomonas fluorescens subsp. cellulosa).